The following is a 711-amino-acid chain: Ribosomal RNA large subunit methyltransferase K/L (711 aa).

The region spanning 43-154 (LGYRITLWSR…RGQITIGLNF (112 aa)) is the THUMP domain.

It belongs to the methyltransferase superfamily. RlmKL family.

The protein localises to the cytoplasm. It catalyses the reaction guanosine(2445) in 23S rRNA + S-adenosyl-L-methionine = N(2)-methylguanosine(2445) in 23S rRNA + S-adenosyl-L-homocysteine + H(+). The enzyme catalyses guanosine(2069) in 23S rRNA + S-adenosyl-L-methionine = N(2)-methylguanosine(2069) in 23S rRNA + S-adenosyl-L-homocysteine + H(+). Functionally, specifically methylates the guanine in position 2445 (m2G2445) and the guanine in position 2069 (m7G2069) of 23S rRNA. The chain is Ribosomal RNA large subunit methyltransferase K/L from Shewanella woodyi (strain ATCC 51908 / MS32).